We begin with the raw amino-acid sequence, 227 residues long: Cytochrome c oxidase subunit 2 (227 aa).

The Mitochondrial intermembrane portion of the chain corresponds to 1-14 (MAYPFQLGLQDATS). Residues 15–45 (PIMEELLHFHDHTLMIVFLISSLVLYIISLM) traverse the membrane as a helical segment. Residues 46 to 59 (LTTKLTHTSTMDAQ) lie on the Mitochondrial matrix side of the membrane. A helical membrane pass occupies residues 60–87 (EVETVWTILPAIILILIALPSLRILYMM). Residues 88-227 (DEINNPSLTV…YFETWSALMV (140 aa)) are Mitochondrial intermembrane-facing. Residues histidine 161, cysteine 196, glutamate 198, cysteine 200, histidine 204, and methionine 207 each contribute to the Cu cation site. Mg(2+) is bound at residue glutamate 198. The residue at position 218 (tyrosine 218) is a Phosphotyrosine.

The protein belongs to the cytochrome c oxidase subunit 2 family. In terms of assembly, component of the cytochrome c oxidase (complex IV, CIV), a multisubunit enzyme composed of 14 subunits. The complex is composed of a catalytic core of 3 subunits MT-CO1, MT-CO2 and MT-CO3, encoded in the mitochondrial DNA, and 11 supernumerary subunits COX4I, COX5A, COX5B, COX6A, COX6B, COX6C, COX7A, COX7B, COX7C, COX8 and NDUFA4, which are encoded in the nuclear genome. The complex exists as a monomer or a dimer and forms supercomplexes (SCs) in the inner mitochondrial membrane with NADH-ubiquinone oxidoreductase (complex I, CI) and ubiquinol-cytochrome c oxidoreductase (cytochrome b-c1 complex, complex III, CIII), resulting in different assemblies (supercomplex SCI(1)III(2)IV(1) and megacomplex MCI(2)III(2)IV(2)). Found in a complex with TMEM177, COA6, COX18, COX20, SCO1 and SCO2. Interacts with TMEM177 in a COX20-dependent manner. Interacts with COX20. Interacts with COX16. It depends on Cu cation as a cofactor.

The protein resides in the mitochondrion inner membrane. It catalyses the reaction 4 Fe(II)-[cytochrome c] + O2 + 8 H(+)(in) = 4 Fe(III)-[cytochrome c] + 2 H2O + 4 H(+)(out). Functionally, component of the cytochrome c oxidase, the last enzyme in the mitochondrial electron transport chain which drives oxidative phosphorylation. The respiratory chain contains 3 multisubunit complexes succinate dehydrogenase (complex II, CII), ubiquinol-cytochrome c oxidoreductase (cytochrome b-c1 complex, complex III, CIII) and cytochrome c oxidase (complex IV, CIV), that cooperate to transfer electrons derived from NADH and succinate to molecular oxygen, creating an electrochemical gradient over the inner membrane that drives transmembrane transport and the ATP synthase. Cytochrome c oxidase is the component of the respiratory chain that catalyzes the reduction of oxygen to water. Electrons originating from reduced cytochrome c in the intermembrane space (IMS) are transferred via the dinuclear copper A center (CU(A)) of subunit 2 and heme A of subunit 1 to the active site in subunit 1, a binuclear center (BNC) formed by heme A3 and copper B (CU(B)). The BNC reduces molecular oxygen to 2 water molecules using 4 electrons from cytochrome c in the IMS and 4 protons from the mitochondrial matrix. In Canis mesomelas elongae (Eastern African black-backed jackal), this protein is Cytochrome c oxidase subunit 2 (MT-CO2).